Consider the following 1262-residue polypeptide: ATP-dependent helicase/nuclease subunit A (1262 aa).

The region spanning 5–476 (FSFTPSQDQA…IVLAENFRSM (472 aa)) is the UvrD-like helicase ATP-binding domain. An ATP-binding site is contributed by 26–33 (ASAGSGKT). The UvrD-like helicase C-terminal domain maps to 515–808 (DTVTSTAELL…SVMTIHGSKG (294 aa)).

Belongs to the helicase family. AddA subfamily. As to quaternary structure, heterodimer of AddA and AddB/RexB. Mg(2+) is required as a cofactor.

The enzyme catalyses Couples ATP hydrolysis with the unwinding of duplex DNA by translocating in the 3'-5' direction.. The catalysed reaction is ATP + H2O = ADP + phosphate + H(+). Functionally, the heterodimer acts as both an ATP-dependent DNA helicase and an ATP-dependent, dual-direction single-stranded exonuclease. Recognizes the chi site generating a DNA molecule suitable for the initiation of homologous recombination. The AddA nuclease domain is required for chi fragment generation; this subunit has the helicase and 3' -&gt; 5' nuclease activities. This Levilactobacillus brevis (strain ATCC 367 / BCRC 12310 / CIP 105137 / JCM 1170 / LMG 11437 / NCIMB 947 / NCTC 947) (Lactobacillus brevis) protein is ATP-dependent helicase/nuclease subunit A.